The chain runs to 500 residues: Toluene-4-monooxygenase system, hydroxylase component subunit alpha (500 aa).

6 residues coordinate Fe cation: Glu-104, Glu-134, His-137, Glu-197, Glu-231, and His-234.

The protein belongs to the TmoA/XamoA family. As to quaternary structure, the alkene monooxygenase multicomponent enzyme system is composed of an electron transfer component and a monooxygenase component interacting with the effector protein TmoD. The electron transfer component is composed of a ferredoxin reductase (TmoF) and a ferredoxin (TmoC), and the monooxygenase component is formed by a heterohexamer (dimer of heterotrimers) of two alpha subunits (TmoA), two beta subunits (TmoE) and two gamma subunits (TmoB). Fe(2+) serves as cofactor.

It carries out the reaction toluene + NADH + O2 + H(+) = 4-methylphenol + NAD(+) + H2O. Its pathway is xenobiotic degradation; toluene degradation. Its activity is regulated as follows. Inhibited by Zn(2+) and Cu(2+). In terms of biological role, component of the toluene-4-monooxygenase multicomponent enzyme system which catalyzes the O2- and NADH-dependent hydroxylation of toluene to form p-cresol. Also able to convert benzene to phenol, catechol, and 1,2,3-trihydroxybenzene by successive hydroxylations. The chain is Toluene-4-monooxygenase system, hydroxylase component subunit alpha from Ectopseudomonas mendocina (Pseudomonas mendocina).